The sequence spans 229 residues: Ribonuclease 3 (229 aa).

The 123-residue stretch at 5 to 127 (LDRLERKLGY…LIGAIYLDTG (123 aa)) folds into the RNase III domain. Position 40 (Glu40) interacts with Mg(2+). The active site involves Asp44. Mg(2+) contacts are provided by Asp113 and Glu116. Residue Glu116 is part of the active site. Positions 154 to 224 (DPKTRLQEFL…AAAALVALGV (71 aa)) constitute a DRBM domain.

It belongs to the ribonuclease III family. In terms of assembly, homodimer. Mg(2+) serves as cofactor.

It is found in the cytoplasm. The enzyme catalyses Endonucleolytic cleavage to 5'-phosphomonoester.. Its function is as follows. Digests double-stranded RNA. Involved in the processing of primary rRNA transcript to yield the immediate precursors to the large and small rRNAs (23S and 16S). Processes some mRNAs, and tRNAs when they are encoded in the rRNA operon. Processes pre-crRNA and tracrRNA of type II CRISPR loci if present in the organism. The sequence is that of Ribonuclease 3 from Pseudomonas paraeruginosa (strain DSM 24068 / PA7) (Pseudomonas aeruginosa (strain PA7)).